The following is a 250-amino-acid chain: Coproheme decarboxylase (250 aa).

Fe-coproporphyrin III contacts are provided by residues R131, 145-149 (YPMNK), H172, and Q185. The active site involves Y145.

The protein belongs to the ChdC family. Type 1 subfamily. It depends on Fe-coproporphyrin III as a cofactor.

The catalysed reaction is Fe-coproporphyrin III + 2 H2O2 + 2 H(+) = heme b + 2 CO2 + 4 H2O. The enzyme catalyses Fe-coproporphyrin III + H2O2 + H(+) = harderoheme III + CO2 + 2 H2O. It carries out the reaction harderoheme III + H2O2 + H(+) = heme b + CO2 + 2 H2O. Its pathway is porphyrin-containing compound metabolism; protoheme biosynthesis. In terms of biological role, involved in coproporphyrin-dependent heme b biosynthesis. Catalyzes the decarboxylation of Fe-coproporphyrin III (coproheme) to heme b (protoheme IX), the last step of the pathway. The reaction occurs in a stepwise manner with a three-propionate intermediate. This chain is Coproheme decarboxylase, found in Staphylococcus aureus (strain Mu50 / ATCC 700699).